The primary structure comprises 341 residues: Thiamine-phosphate synthase (341 aa).

Residues Met-1 to Arg-123 are unknown. Positions Ala-61–Val-80 are disordered. Positions Val-124–Gly-341 are thiamine-phosphate synthase. Residues Gln-171 to Lys-175 and Asn-203 each bind 4-amino-2-methyl-5-(diphosphooxymethyl)pyrimidine. Mg(2+) contacts are provided by Asp-204 and Asp-223. Ser-242 serves as a coordination point for 4-amino-2-methyl-5-(diphosphooxymethyl)pyrimidine. A 2-[(2R,5Z)-2-carboxy-4-methylthiazol-5(2H)-ylidene]ethyl phosphate-binding site is contributed by Thr-268–Thr-270. Lys-271 lines the 4-amino-2-methyl-5-(diphosphooxymethyl)pyrimidine pocket. Gly-298 is a 2-[(2R,5Z)-2-carboxy-4-methylthiazol-5(2H)-ylidene]ethyl phosphate binding site.

The protein belongs to the thiamine-phosphate synthase family. Mg(2+) is required as a cofactor.

It carries out the reaction 2-[(2R,5Z)-2-carboxy-4-methylthiazol-5(2H)-ylidene]ethyl phosphate + 4-amino-2-methyl-5-(diphosphooxymethyl)pyrimidine + 2 H(+) = thiamine phosphate + CO2 + diphosphate. It catalyses the reaction 2-(2-carboxy-4-methylthiazol-5-yl)ethyl phosphate + 4-amino-2-methyl-5-(diphosphooxymethyl)pyrimidine + 2 H(+) = thiamine phosphate + CO2 + diphosphate. The catalysed reaction is 4-methyl-5-(2-phosphooxyethyl)-thiazole + 4-amino-2-methyl-5-(diphosphooxymethyl)pyrimidine + H(+) = thiamine phosphate + diphosphate. Its pathway is cofactor biosynthesis; thiamine diphosphate biosynthesis; thiamine phosphate from 4-amino-2-methyl-5-diphosphomethylpyrimidine and 4-methyl-5-(2-phosphoethyl)-thiazole: step 1/1. Functionally, condenses 4-methyl-5-(beta-hydroxyethyl)thiazole monophosphate (THZ-P) and 2-methyl-4-amino-5-hydroxymethyl pyrimidine pyrophosphate (HMP-PP) to form thiamine monophosphate (TMP). This is Thiamine-phosphate synthase from Gloeobacter violaceus (strain ATCC 29082 / PCC 7421).